Consider the following 153-residue polypeptide: MRIWVDADACPAPIKELIVRTARRLRIPAVFVANKFISIPDSACVSTVRVELGPEIVDEYIAKHAEPGDFTITQDIPLASVLVPKGVTVIDPRGELYTEENIRERLSIRNFMQDLREAGGITPGPRQFGQKEKQRFSDTLDREITKRFKLQGN.

Belongs to the UPF0178 family.

This chain is UPF0178 protein Sfum_1097, found in Syntrophobacter fumaroxidans (strain DSM 10017 / MPOB).